A 499-amino-acid chain; its full sequence is uncharacterized protein (499 aa).

Helical transmembrane passes span 51 to 71, 98 to 118, 127 to 147, 155 to 175, 187 to 207, 220 to 240, 301 to 321, 325 to 345, 352 to 372, 378 to 398, 412 to 432, and 444 to 464; these read LLFRLDLVLAPTIMILYLVAF, IIASVFYVTFILFEMPTTLLM, LAFIVISYSLTTIFTGFCHNF, LVLGFCEAGLFPCLALYLTMI, YLFASSALSGAFGGLFAYAVL, WLFIIEGLIGFVCGVAVYFII, CLYGFSTFLPAIISGMGYTSL, YMTIPVYILGAATYIAASFLS, GIILIIGNIFPIVGYILLLAC, VLYFACYLCSVGVYTGAGLNV, ATAISLQLAIANSSGILAGQI, and LTSLIAIFISTVLHVVNIFFL.

The protein belongs to the major facilitator superfamily. Allantoate permease family.

The protein resides in the golgi apparatus. The protein localises to the membrane. This is an uncharacterized protein from Schizosaccharomyces pombe (strain 972 / ATCC 24843) (Fission yeast).